We begin with the raw amino-acid sequence, 326 residues long: PDZ domain-containing protein MAGIX (326 aa).

A disordered region spans residues 1–32; the sequence is MDSHAGNTADPRGSRRGVGLQGSGSPRARQLL. One can recognise a PDZ domain in the interval 128–212; it reads SVELVRGPAG…RLCLVLQRPQ (85 aa). The disordered stretch occupies residues 214–267; that stretch reads MNGSRSKEVGGGHQKTDRIPDPRGGRMMESRGTISPVHHRPKTRTGPGPSPESV. Basic and acidic residues predominate over residues 218 to 242; it reads RSKEVGGGHQKTDRIPDPRGGRMME. Residue serine 263 is modified to Phosphoserine.

The sequence is that of PDZ domain-containing protein MAGIX (Magix) from Rattus norvegicus (Rat).